The following is a 933-amino-acid chain: Isoleucine--tRNA ligase (933 aa).

The 'HIGH' region motif lies at 57–67 (PYANGNIHVGH). An L-isoleucyl-5'-AMP-binding site is contributed by Glu554. A 'KMSKS' region motif is present at residues 595–599 (KMSKS). Lys598 contacts ATP.

Belongs to the class-I aminoacyl-tRNA synthetase family. IleS type 1 subfamily. In terms of assembly, monomer.

Its subcellular location is the cytoplasm. It catalyses the reaction tRNA(Ile) + L-isoleucine + ATP = L-isoleucyl-tRNA(Ile) + AMP + diphosphate. Its function is as follows. Catalyzes the attachment of isoleucine to tRNA(Ile). As IleRS can inadvertently accommodate and process structurally similar amino acids such as valine, to avoid such errors it has two additional distinct tRNA(Ile)-dependent editing activities. One activity is designated as 'pretransfer' editing and involves the hydrolysis of activated Val-AMP. The other activity is designated 'posttransfer' editing and involves deacylation of mischarged Val-tRNA(Ile). This chain is Isoleucine--tRNA ligase, found in Streptococcus pyogenes serotype M28 (strain MGAS6180).